We begin with the raw amino-acid sequence, 162 residues long: Small ribosomal subunit protein uS19 (162 aa).

Over residues M1–R27 the composition is skewed to basic residues. The segment at M1–R29 is disordered.

Belongs to the universal ribosomal protein uS19 family.

Functionally, protein S19 forms a complex with S13 that binds strongly to the 16S ribosomal RNA. In Methanococcus aeolicus (strain ATCC BAA-1280 / DSM 17508 / OCM 812 / Nankai-3), this protein is Small ribosomal subunit protein uS19.